The following is a 264-amino-acid chain: 3-methyl-2-oxobutanoate hydroxymethyltransferase (264 aa).

Mg(2+)-binding residues include Asp45 and Asp84. 3-methyl-2-oxobutanoate-binding positions include 45 to 46 (DS), Asp84, and Lys112. Glu114 contributes to the Mg(2+) binding site. Residue Glu181 is the Proton acceptor of the active site.

The protein belongs to the PanB family. As to quaternary structure, homodecamer; pentamer of dimers. The cofactor is Mg(2+).

It localises to the cytoplasm. The enzyme catalyses 3-methyl-2-oxobutanoate + (6R)-5,10-methylene-5,6,7,8-tetrahydrofolate + H2O = 2-dehydropantoate + (6S)-5,6,7,8-tetrahydrofolate. Its pathway is cofactor biosynthesis; (R)-pantothenate biosynthesis; (R)-pantoate from 3-methyl-2-oxobutanoate: step 1/2. Functionally, catalyzes the reversible reaction in which hydroxymethyl group from 5,10-methylenetetrahydrofolate is transferred onto alpha-ketoisovalerate to form ketopantoate. The sequence is that of 3-methyl-2-oxobutanoate hydroxymethyltransferase from Escherichia coli O157:H7.